Here is a 287-residue protein sequence, read N- to C-terminus: 23S rRNA (uridine(2479)-2'-O)-methyltransferase (287 aa).

S-adenosyl-L-methionine is bound by residues 210–211 (TD), Gly232, and 252–254 (IPM).

This sequence belongs to the class IV-like SAM-binding methyltransferase superfamily. RNA methyltransferase TsnR/AvirB family. As to quaternary structure, homodimer.

The enzyme catalyses uridine(2479) in 23S rRNA + S-adenosyl-L-methionine = 2'-O-methyluridine(2479) in 23S rRNA + S-adenosyl-L-homocysteine + H(+). In terms of biological role, specifically methylates the 2'-O-ribose position of uridine-2479 in 23S ribosomal RNA. Confers resistance to antibiotic avilamycin, an orthosomycin antibiotic. This Streptomyces viridochromogenes protein is 23S rRNA (uridine(2479)-2'-O)-methyltransferase (aviRb).